We begin with the raw amino-acid sequence, 568 residues long: Type 3 secretion system secretin (568 aa).

An N-terminal signal peptide occupies residues 1–15; the sequence is MAAALLLWTAGTVCA. Residues 203-292 are disordered; sequence YGGDGPSDSG…RGSTPIIRAD (90 aa). Residues 243–257 are compositionally biased toward gly residues; that stretch reads LGGGKSPLPPGGTGQ. Over residues 273-284 the composition is skewed to basic and acidic residues; that stretch reads NRLRSDELDDRG.

Belongs to the bacterial secretin family. T3SS SctC subfamily. As to quaternary structure, the core secretion machinery of the T3SS is composed of approximately 20 different proteins, including cytoplasmic components, a base, an export apparatus and a needle. This subunit is part of the base, which anchors the injectisome in the bacterial cell envelope. Forms a stable homooligomeric complex.

The protein localises to the cell outer membrane. Its function is as follows. Component of the type III secretion system (T3SS), also called injectisome, which is used to inject bacterial effector proteins into eukaryotic host cells. Forms a ring-shaped multimeric structure with an apparent central pore in the outer membrane. This Ralstonia nicotianae (strain ATCC BAA-1114 / GMI1000) (Ralstonia solanacearum) protein is Type 3 secretion system secretin.